The primary structure comprises 362 residues: tRNA 2-selenouridine synthase (362 aa).

One can recognise a Rhodanese domain in the interval Phe12–Glu135. Cys95 (S-selanylcysteine intermediate) is an active-site residue.

The protein belongs to the SelU family. In terms of assembly, monomer.

The catalysed reaction is 5-methylaminomethyl-2-thiouridine(34) in tRNA + selenophosphate + (2E)-geranyl diphosphate + H2O + H(+) = 5-methylaminomethyl-2-selenouridine(34) in tRNA + (2E)-thiogeraniol + phosphate + diphosphate. It catalyses the reaction 5-methylaminomethyl-2-thiouridine(34) in tRNA + (2E)-geranyl diphosphate = 5-methylaminomethyl-S-(2E)-geranyl-thiouridine(34) in tRNA + diphosphate. It carries out the reaction 5-methylaminomethyl-S-(2E)-geranyl-thiouridine(34) in tRNA + selenophosphate + H(+) = 5-methylaminomethyl-2-(Se-phospho)selenouridine(34) in tRNA + (2E)-thiogeraniol. The enzyme catalyses 5-methylaminomethyl-2-(Se-phospho)selenouridine(34) in tRNA + H2O = 5-methylaminomethyl-2-selenouridine(34) in tRNA + phosphate. Its function is as follows. Involved in the post-transcriptional modification of the uridine at the wobble position (U34) of tRNA(Lys), tRNA(Glu) and tRNA(Gln). Catalyzes the conversion of 2-thiouridine (S2U-RNA) to 2-selenouridine (Se2U-RNA). Acts in a two-step process involving geranylation of 2-thiouridine (S2U) to S-geranyl-2-thiouridine (geS2U) and subsequent selenation of the latter derivative to 2-selenouridine (Se2U) in the tRNA chain. This is tRNA 2-selenouridine synthase from Alcanivorax borkumensis (strain ATCC 700651 / DSM 11573 / NCIMB 13689 / SK2).